We begin with the raw amino-acid sequence, 395 residues long: Multidrug resistance protein MdtL (395 aa).

Topologically, residues 1-3 (MKR) are cytoplasmic. A helical transmembrane segment spans residues 4 to 24 (FLLCSFALVLLYPAGIDMYLV). Topologically, residues 25 to 41 (GLPRIAADLNASEAQLH) are periplasmic. A helical membrane pass occupies residues 42–62 (IAFSVYLAGMATAMLFAGKIA). The Cytoplasmic segment spans residues 63–68 (DQSGRK). Residues 69–89 (PVAIVGAIVFMMASLLCSRAS) traverse the membrane as a helical segment. Over 90-92 (EGS) the chain is Periplasmic. Residues 93–113 (LFLSGRFLQGVGAGGCYVVAF) form a helical membrane-spanning segment. At 114–130 (AILRDTLDEHRRAKVLS) the chain is on the cytoplasmic side. A helical membrane pass occupies residues 131 to 151 (LLNGITCIVPVLAPVMGHLIM). Residues 152 to 157 (LRFPWQ) lie on the Periplasmic side of the membrane. A helical membrane pass occupies residues 158-178 (SLFYTMSTMGIMVGLLSLFIL). Residues 179-216 (RETRPARLAPRDLSPSSSAAESLVNRFFVSRLAITTLS) are Cytoplasmic-facing. A helical membrane pass occupies residues 217 to 237 (VSVILTFVNASPVLLMEVMGF). The Periplasmic portion of the chain corresponds to 238–246 (SRGDYAITM). A helical membrane pass occupies residues 247–267 (ALTAGVSMVVSFSTPFALGLF). The Cytoplasmic segment spans residues 268 to 270 (KPR). A helical transmembrane segment spans residues 271–291 (TLMLVSQGLFLTAGVTLSLAH). Residues 292 to 294 (TNT) are Periplasmic-facing. Residues 295 to 315 (VTLFGLTLICAGFSVGFGVAM) traverse the membrane as a helical segment. Topologically, residues 316 to 332 (SQALGPFSLRAGVASST) are cytoplasmic. A helical transmembrane segment spans residues 333-353 (LGIAQVCGSSLWIWLAAILGI). Over 354-357 (SAMN) the chain is Periplasmic. The helical transmembrane segment at 358 to 378 (MLIGILIGCSIVSILLIFSVA) threads the bilayer. At 379-395 (PNRSVAEHEEIPYQSRS) the chain is on the cytoplasmic side.

Belongs to the major facilitator superfamily. DHA1 family. MdtL (TC 2.A.1.2.22) subfamily.

It is found in the cell inner membrane. The sequence is that of Multidrug resistance protein MdtL (mdtL) from Salmonella typhi.